A 139-amino-acid chain; its full sequence is Small ribosomal subunit protein uS12m (139 aa).

Positions 1–21 are disordered; the sequence is MLSTLYQNDLKKKRNRRRNRS. A compositionally biased stretch (basic residues) spans 11–20; sequence KKKRNRRRNR.

The protein belongs to the universal ribosomal protein uS12 family.

It is found in the mitochondrion. Protein S12 is involved in the translation initiation step. In Paramecium tetraurelia, this protein is Small ribosomal subunit protein uS12m (RPS12).